Consider the following 29-residue polypeptide: Cyclotide vibi-B (29 aa).

A cross-link (cyclopeptide (Gly-Asn)) is located at residues 1 to 29; that stretch reads GLPVCGETCFGGTCNTPGCTCSYPICTRN. 3 disulfide bridges follow: cysteine 5–cysteine 19, cysteine 9–cysteine 21, and cysteine 14–cysteine 26.

Post-translationally, this is a cyclic peptide.

Its function is as follows. Probably participates in a plant defense mechanism. This chain is Cyclotide vibi-B, found in Viola biflora (Yellow wood violet).